The chain runs to 72 residues: Putative transmembrane protein DDB_G0272126 (72 aa).

2 consecutive transmembrane segments (helical) span residues 6–26 (KIIKSSYTLLSFFYFIANTII) and 38–58 (IILVSLYYLVFSLFITRIFYG).

It localises to the membrane. This Dictyostelium discoideum (Social amoeba) protein is Putative transmembrane protein DDB_G0272126.